Consider the following 236-residue polypeptide: Three prime repair exonuclease 2 (236 aa).

Positions 14 and 16 each coordinate Mg(2+). Substrate is bound by residues 16 to 17 (EA) and tyrosine 122. Histidine 188 serves as the catalytic Proton donor/acceptor. Mg(2+) is bound at residue aspartate 193. Aspartate 193 is a substrate binding site.

Belongs to the exonuclease superfamily. TREX family. In terms of assembly, homodimer. It depends on Mg(2+) as a cofactor. As to expression, detected in heart, breast, prostate, skeletal muscle, testis, uterus, bone marrow, colon, small intestine, stomach and thymus.

The protein resides in the nucleus. It carries out the reaction Exonucleolytic cleavage in the 3'- to 5'-direction to yield nucleoside 5'-phosphates.. In terms of biological role, exonuclease with a preference for double-stranded DNA with mismatched 3' termini. May play a role in DNA repair. In Homo sapiens (Human), this protein is Three prime repair exonuclease 2 (TREX2).